Consider the following 436-residue polypeptide: Bystin (436 aa).

A Phosphothreonine modification is found at Thr-145. A phosphoserine mark is found at Ser-148 and Ser-152.

Belongs to the bystin family.

It is found in the nucleus. It localises to the nucleolus. In terms of biological role, required for processing of 20S pre-rRNA precursor and biogenesis of 40S ribosomal subunits. In Drosophila melanogaster (Fruit fly), this protein is Bystin (bys).